Reading from the N-terminus, the 236-residue chain is uncharacterized protein (236 aa).

Belongs to the HyuE racemase family.

Its subcellular location is the cytoplasm. This is an uncharacterized protein from Schizosaccharomyces pombe (strain 972 / ATCC 24843) (Fission yeast).